A 105-amino-acid polypeptide reads, in one-letter code: NADH-quinone oxidoreductase subunit K (105 aa).

The next 3 helical transmembrane spans lie at 8–28 (VTNG…GIII), 33–53 (ILIL…NFLI), and 65–85 (VFVF…LAIV).

The protein belongs to the complex I subunit 4L family. NDH-1 is composed of 14 different subunits. Subunits NuoA, H, J, K, L, M, N constitute the membrane sector of the complex.

It localises to the cell inner membrane. The catalysed reaction is a quinone + NADH + 5 H(+)(in) = a quinol + NAD(+) + 4 H(+)(out). In terms of biological role, NDH-1 shuttles electrons from NADH, via FMN and iron-sulfur (Fe-S) centers, to quinones in the respiratory chain. The immediate electron acceptor for the enzyme in this species is believed to be ubiquinone. Couples the redox reaction to proton translocation (for every two electrons transferred, four hydrogen ions are translocated across the cytoplasmic membrane), and thus conserves the redox energy in a proton gradient. In Francisella philomiragia subsp. philomiragia (strain ATCC 25017 / CCUG 19701 / FSC 153 / O#319-036), this protein is NADH-quinone oxidoreductase subunit K.